Consider the following 251-residue polypeptide: MASKPQPIAAANWKCNGSESLLVPLIETLNAATFDHDVQCVVAPTFLHIPMTKARLTNPKFQIAAQNAITRSGAFTGEVSLQILKDYGISWVVLGHSERRLYYGETNEIVAEKVAQACAAGFHVIVCVGETNEEREAGRTAAVVLTQLAAVAQKLSKEAWSRVVIAYEPVWAIGTGKVATPQQAQEVHELLRRWVRSKLGTDIAAQLRILYGGSVTAKNARTLYQMRDINGFLVGGASLKPEFVEIIEATK.

Asn12 and Lys14 together coordinate substrate. The active-site Electrophile is His96. The Proton acceptor role is filled by Glu168.

The protein belongs to the triosephosphate isomerase family. Homodimer.

The protein resides in the glycosome. It carries out the reaction D-glyceraldehyde 3-phosphate = dihydroxyacetone phosphate. It functions in the pathway carbohydrate biosynthesis; gluconeogenesis. The protein operates within carbohydrate degradation; glycolysis; D-glyceraldehyde 3-phosphate from glycerone phosphate: step 1/1. This Trypanosoma cruzi protein is Triosephosphate isomerase, glycosomal.